The primary structure comprises 127 residues: uncharacterized protein (127 aa).

This is an uncharacterized protein from Caenorhabditis elegans.